Consider the following 521-residue polypeptide: MFRQSRWDEPLIFELGNKGRKGFIVPEPEEEVKRKVGGIRIPEKILRKKPPNLPEVSEVEVIRHYTRLTEMSYGVDNGPVPLGSCTMKYNPRIAWEISNDYRINMLHPLQDERTIQGLLEILYELQKWLANITGMDYCSLHPAAGAHGEFSGILIIRKYHELKKQLDRKSEIIIPDSAHGTNPASASMGGFKVVEVPSGEDGNIDMEALKSVVGESTAGLMITNPSTLGLFEENVVEISKIIHGVDGLLYYDGANLNGIMGYTRPGDMGFDIAHINIHKTFGAPHGGGGPGAGPVCVKDKLIDEERNIWLRDLLPGYRVVYDEKTGLYKLVNNEKYSIGLLKAFFGNIVPLIWGYTYILMLGSKGLRTVTEQAVLNTNYFISLVKDIRGYDIPYGKDRYRKHEVVLSAKPLYDDTGVSAEDVAKGLLDAGFYAPTIYFPLIVHEALMTEFTESETIEYIEKYAERLQEISTIAYSDPEKAKEWPLNTSVRRVDNVRANHPKTLAPTWRIYMEKVCRKYSEC.

Lys-279 carries the N6-(pyridoxal phosphate)lysine modification.

The protein belongs to the GcvP family. C-terminal subunit subfamily. As to quaternary structure, the glycine cleavage system is composed of four proteins: P, T, L and H. In this organism, the P 'protein' is a heterodimer of two subunits. Pyridoxal 5'-phosphate is required as a cofactor.

The catalysed reaction is N(6)-[(R)-lipoyl]-L-lysyl-[glycine-cleavage complex H protein] + glycine + H(+) = N(6)-[(R)-S(8)-aminomethyldihydrolipoyl]-L-lysyl-[glycine-cleavage complex H protein] + CO2. Functionally, the glycine cleavage system catalyzes the degradation of glycine. The P protein binds the alpha-amino group of glycine through its pyridoxal phosphate cofactor; CO(2) is released and the remaining methylamine moiety is then transferred to the lipoamide cofactor of the H protein. This is Probable glycine dehydrogenase (decarboxylating) subunit 2 from Staphylothermus marinus (strain ATCC 43588 / DSM 3639 / JCM 9404 / F1).